Reading from the N-terminus, the 97-residue chain is Acylphosphatase (97 aa).

In terms of domain architecture, Acylphosphatase-like spans 7 to 97 (RLTAWVHGHV…QERFEGFVER (91 aa)). Catalysis depends on residues arginine 22 and asparagine 40.

The protein belongs to the acylphosphatase family.

It catalyses the reaction an acyl phosphate + H2O = a carboxylate + phosphate + H(+). This chain is Acylphosphatase (acyP), found in Mycobacterium avium (strain 104).